We begin with the raw amino-acid sequence, 102 residues long: Large ribosomal subunit protein bL21 (102 aa).

It belongs to the bacterial ribosomal protein bL21 family. In terms of assembly, part of the 50S ribosomal subunit. Contacts protein L20.

This protein binds to 23S rRNA in the presence of protein L20. This is Large ribosomal subunit protein bL21 from Desulfovibrio desulfuricans (strain ATCC 27774 / DSM 6949 / MB).